The following is a 282-amino-acid chain: Bis(5'-nucleosyl)-tetraphosphatase, symmetrical (282 aa).

This sequence belongs to the Ap4A hydrolase family.

The enzyme catalyses P(1),P(4)-bis(5'-adenosyl) tetraphosphate + H2O = 2 ADP + 2 H(+). Hydrolyzes diadenosine 5',5'''-P1,P4-tetraphosphate to yield ADP. This chain is Bis(5'-nucleosyl)-tetraphosphatase, symmetrical, found in Burkholderia thailandensis (strain ATCC 700388 / DSM 13276 / CCUG 48851 / CIP 106301 / E264).